Consider the following 136-residue polypeptide: Protein NrdI (136 aa).

Belongs to the NrdI family.

Its function is as follows. Probably involved in ribonucleotide reductase function. The sequence is that of Protein NrdI from Salmonella typhi.